The sequence spans 258 residues: Thiazole synthase (258 aa).

Catalysis depends on K97, which acts as the Schiff-base intermediate with DXP. Residues G158, 184–185 (AG), and 206–207 (NT) each bind 1-deoxy-D-xylulose 5-phosphate.

Belongs to the ThiG family. As to quaternary structure, homotetramer. Forms heterodimers with either ThiH or ThiS.

It is found in the cytoplasm. The enzyme catalyses [ThiS sulfur-carrier protein]-C-terminal-Gly-aminoethanethioate + 2-iminoacetate + 1-deoxy-D-xylulose 5-phosphate = [ThiS sulfur-carrier protein]-C-terminal Gly-Gly + 2-[(2R,5Z)-2-carboxy-4-methylthiazol-5(2H)-ylidene]ethyl phosphate + 2 H2O + H(+). The protein operates within cofactor biosynthesis; thiamine diphosphate biosynthesis. In terms of biological role, catalyzes the rearrangement of 1-deoxy-D-xylulose 5-phosphate (DXP) to produce the thiazole phosphate moiety of thiamine. Sulfur is provided by the thiocarboxylate moiety of the carrier protein ThiS. In vitro, sulfur can be provided by H(2)S. This is Thiazole synthase from Bacteroides fragilis (strain ATCC 25285 / DSM 2151 / CCUG 4856 / JCM 11019 / LMG 10263 / NCTC 9343 / Onslow / VPI 2553 / EN-2).